Reading from the N-terminus, the 443-residue chain is Chromosomal replication initiator protein DnaA (443 aa).

Residues 1-73 are domain I, interacts with DnaA modulators; it reads MYGDHRQIWE…YDAASKATNK (73 aa). The segment at 73–106 is domain II; the sequence is KLYEIKILSEDEEEYREIKESIEKENLTESTTLS. The segment at 107-323 is domain III, AAA+ region; sequence TLNPKYTFDT…GALIRIVAFS (217 aa). Residues glycine 151, glycine 153, lysine 154, and threonine 155 each contribute to the ATP site. Residues 324-443 form a domain IV, binds dsDNA region; the sequence is NLTKANIDLE…EELKKRIKGY (120 aa).

The protein belongs to the DnaA family. In terms of assembly, oligomerizes as a right-handed, spiral filament on DNA at oriC.

The protein localises to the cytoplasm. Plays an essential role in the initiation and regulation of chromosomal replication. ATP-DnaA binds to the origin of replication (oriC) to initiate formation of the DNA replication initiation complex once per cell cycle. Binds the DnaA box (a 9 base pair repeat at the origin) and separates the double-stranded (ds)DNA. Forms a right-handed helical filament on oriC DNA; dsDNA binds to the exterior of the filament while single-stranded (ss)DNA is stabiized in the filament's interior. The ATP-DnaA-oriC complex binds and stabilizes one strand of the AT-rich DNA unwinding element (DUE), permitting loading of DNA polymerase. After initiation quickly degrades to an ADP-DnaA complex that is not apt for DNA replication. Binds acidic phospholipids. This chain is Chromosomal replication initiator protein DnaA, found in Thermoanaerobacter pseudethanolicus (strain ATCC 33223 / 39E) (Clostridium thermohydrosulfuricum).